Reading from the N-terminus, the 1375-residue chain is Probable GMP synthase [glutamine-hydrolyzing] (1375 aa).

Residues 7 to 119 enclose the Glutamine amidotransferase type-1; first part domain; sequence QILVLDFGSQ…VLEIMESSQD (113 aa). C84 acts as the Nucleophile in catalysis. Positions 120 to 500 are insert-1; the sequence is SKDSSCFAFQ…NNATQGFKSC (381 aa). N-acetyltransferase domains lie at 141–300 and 318–484; these read LSFD…KALE and VFLR…LEKK. Positions 501–580 constitute a Glutamine amidotransferase type-1; second part domain; that stretch reads SLFKGIKQDS…AVGICGANTC (80 aa). Catalysis depends on residues H554 and E556. The tract at residues 597–1071 is insert-2; that stretch reads IVYGGKAHCE…SGVANSLKIT (475 aa). An N-acetyltransferase 3 domain is found at 612–765; that stretch reads MQIQEAFKHI…ELIPLSIARE (154 aa). The disordered stretch occupies residues 1011-1036; sequence RIVDSQHTESSDIKGQSHLESSADSG. Residues 1014 to 1027 show a composition bias toward basic and acidic residues; that stretch reads DSQHTESSDIKGQS. In terms of domain architecture, GMPS ATP-PPase spans 1055-1250; that stretch reads YLEGNDRSGV…LGMPESMLMR (196 aa). 1083–1089 is a binding site for ATP; the sequence is SGGVDSS.

In terms of assembly, homodimer.

It catalyses the reaction XMP + L-glutamine + ATP + H2O = GMP + L-glutamate + AMP + diphosphate + 2 H(+). The protein operates within purine metabolism; GMP biosynthesis; GMP from XMP (L-Gln route): step 1/1. Catalyzes the synthesis of GMP from XMP. The protein is Probable GMP synthase [glutamine-hydrolyzing] (guaA) of Helicobacter hepaticus (strain ATCC 51449 / 3B1).